We begin with the raw amino-acid sequence, 456 residues long: tRNA modification GTPase MnmE (456 aa).

3 residues coordinate (6S)-5-formyl-5,6,7,8-tetrahydrofolate: arginine 25, glutamate 82, and lysine 121. The 163-residue stretch at 217 to 379 folds into the TrmE-type G domain; sequence GIKVVIIGKP…LLDEIVKIAG (163 aa). Asparagine 227 contributes to the K(+) binding site. Residues 227–232, 246–252, and 271–274 each bind GTP; these read NAGKSS, TDIAGTT, and DTAG. Serine 231 lines the Mg(2+) pocket. Threonine 246, isoleucine 248, and threonine 251 together coordinate K(+). A Mg(2+)-binding site is contributed by threonine 252. Lysine 456 is a binding site for (6S)-5-formyl-5,6,7,8-tetrahydrofolate.

It belongs to the TRAFAC class TrmE-Era-EngA-EngB-Septin-like GTPase superfamily. TrmE GTPase family. In terms of assembly, homodimer. Heterotetramer of two MnmE and two MnmG subunits. Requires K(+) as cofactor.

Its subcellular location is the cytoplasm. Its function is as follows. Exhibits a very high intrinsic GTPase hydrolysis rate. Involved in the addition of a carboxymethylaminomethyl (cmnm) group at the wobble position (U34) of certain tRNAs, forming tRNA-cmnm(5)s(2)U34. In Endomicrobium trichonymphae, this protein is tRNA modification GTPase MnmE.